The chain runs to 552 residues: Nucleolar complex protein 4 (552 aa).

This sequence belongs to the CBF/MAK21 family. In terms of assembly, interacts with NOP14 and MPP10. Interacts with snoRNA U3. Component of the ribosomal small subunit (SSU) processome composed of at least 40 protein subunits and snoRNA U3.

Its subcellular location is the nucleus. It localises to the nucleolus. Involved in nucleolar processing of pre-18S ribosomal RNA and ribosome assembly. Has a role in the nuclear export of 40S pre-ribosomal subunit to the cytoplasm. Its subcellular location and association with pre-40S subunit are unaffected by RPS19 disruptions, suggesting it acts before the ribosomal protein. This is Nucleolar complex protein 4 (NOC4) from Saccharomyces cerevisiae (strain ATCC 204508 / S288c) (Baker's yeast).